Consider the following 72-residue polypeptide: UPF0270 protein ETA_31870 (72 aa).

It belongs to the UPF0270 family.

In Erwinia tasmaniensis (strain DSM 17950 / CFBP 7177 / CIP 109463 / NCPPB 4357 / Et1/99), this protein is UPF0270 protein ETA_31870.